An 80-amino-acid chain; its full sequence is MVIIRLARGGAKKRPFYSIVVADKRSKRDGRYIEQLGFFNPIAAGGEVPLRIDMERANYWLSQGAQPSERVAQLFKSYSA.

The protein belongs to the bacterial ribosomal protein bS16 family.

In Nitrosococcus oceani (strain ATCC 19707 / BCRC 17464 / JCM 30415 / NCIMB 11848 / C-107), this protein is Small ribosomal subunit protein bS16.